Consider the following 205-residue polypeptide: Protein N-terminal glutamine amidohydrolase (205 aa).

Active-site residues include Cys20, His74, and Asp90.

Belongs to the NTAQ1 family. As to quaternary structure, monomer.

The catalysed reaction is N-terminal L-glutaminyl-[protein] + H2O = N-terminal L-glutamyl-[protein] + NH4(+). In terms of biological role, mediates the side-chain deamidation of N-terminal glutamine residues to glutamate, an important step in N-end rule pathway of protein degradation. Conversion of the resulting N-terminal glutamine to glutamate renders the protein susceptible to arginylation, polyubiquitination and degradation as specified by the N-end rule. Does not act on substrates with internal or C-terminal glutamine and does not act on non-glutamine residues in any position. The sequence is that of Protein N-terminal glutamine amidohydrolase (tun) from Drosophila ananassae (Fruit fly).